The following is an 84-amino-acid chain: Putative membrane protein insertion efficiency factor (84 aa).

Belongs to the UPF0161 family.

Its subcellular location is the cell inner membrane. In terms of biological role, could be involved in insertion of integral membrane proteins into the membrane. In Shewanella frigidimarina (strain NCIMB 400), this protein is Putative membrane protein insertion efficiency factor.